Reading from the N-terminus, the 64-residue chain is SPbeta prophage-derived uncharacterized protein YosJ (64 aa).

The polypeptide is SPbeta prophage-derived uncharacterized protein YosJ (yosJ) (Bacillus subtilis (strain 168)).